Here is an 859-residue protein sequence, read N- to C-terminus: Catenin delta-1 (859 aa).

Positions 15–44 form a coiled coil; sequence SVRAQEAQFELLSRALEEERRHVTAQLDRV. The segment at 226–254 is disordered; that stretch reads IDGPDYATTGRRGANGGDPRRRLRSYEDP. The segment covering 243-254 has biased composition (basic and acidic residues); it reads DPRRRLRSYEDP. ARM repeat units lie at residues 279–317, 320–359, 363–401, 402–446, 464–503, 513–552, 574–614, 621–660, 661–700, and 701–746; these read APNS…HLSY, EDVK…NLSY, RENK…VTGT, LWNL…RVEG, LRNI…LVDS, LRNI…VRRG, AQGY…NLCA, RCIR…NLCG, DNRN…CVIN, and TIHE…GFCL.

The protein belongs to the beta-catenin family. Interacts with C-cadherin and with zbtb33. As to expression, ubiquitously expressed.

It localises to the cell junction. Its subcellular location is the adherens junction. It is found in the cytoplasm. The protein localises to the nucleus. The protein resides in the cell membrane. Key regulator of cell-cell adhesion that associates with and regulates the cell adhesion properties of both C-, E- and N-cadherins, being critical for their surface stability. Beside cell-cell adhesion, regulates gene transcription through several transcription factors including ZBTB33/Kaiso2 and GLIS2, and the activity of Rho family GTPases and downstream cytoskeletal dynamics. Implicated both in cell transformation by SRC and in ligand-induced receptor signaling through the EGF, PDGF, CSF-1 and ERBB2 receptors. Required for gastrulation, axial elongation and development of the craniofacial skeleton and eye. The protein is Catenin delta-1 (ctnnd1) of Xenopus laevis (African clawed frog).